Here is a 219-residue protein sequence, read N- to C-terminus: Ion-translocating oxidoreductase complex subunit G (219 aa).

A helical transmembrane segment spans residues 25-45 (GLLLGLFSLVSALMLALASDA). Threonine 187 bears the FMN phosphoryl threonine mark.

Belongs to the RnfG family. In terms of assembly, the complex is composed of six subunits: RnfA, RnfB, RnfC, RnfD, RnfE and RnfG. Requires FMN as cofactor.

It is found in the cellular chromatophore membrane. Part of a membrane-bound complex that couples electron transfer with translocation of ions across the membrane. The sequence is that of Ion-translocating oxidoreductase complex subunit G from Cereibacter sphaeroides (strain ATCC 17023 / DSM 158 / JCM 6121 / CCUG 31486 / LMG 2827 / NBRC 12203 / NCIMB 8253 / ATH 2.4.1.) (Rhodobacter sphaeroides).